The chain runs to 192 residues: Apoptosis regulator BAX (192 aa).

An N-acetylmethionine modification is found at Met-1. A BH3 motif is present at residues 59 to 73 (LSECLKRIGDELDSN). The BH1 motif lies at 98 to 118 (DMFSDGNFNWGRVVALFYFAS). Lys-128 is covalently cross-linked (Glycyl lysine isopeptide (Lys-Gly) (interchain with G-Cter in ubiquitin)). Residues 150–165 (GWIQDQGGWDGLLSYF) carry the BH2 motif. The helical transmembrane segment at 172–192 (TVTIFVAGVLTASLTIWKKMG) threads the bilayer. Residue Lys-190 forms a Glycyl lysine isopeptide (Lys-Gly) (interchain with G-Cter in ubiquitin) linkage.

It belongs to the Bcl-2 family. As to quaternary structure, homodimer. Forms higher oligomers under stress conditions. Forms heterooligomers with BAK. Interacts with BCL2L11. Interaction with BCL2L11 promotes BAX oligomerization and association with mitochondrial membranes, with subsequent release of cytochrome c. Forms heterodimers with BCL2, BCL2L1 isoform Bcl-X(L), BCL2L2, MCL1 and A1. Interacts with SH3GLB1. Interacts with humanin; forms fibers with humanin which results in BAX conformational changes and sequestering of BAX into the fibers, preventing BAX activation. Interacts with SFN and YWHAZ; the interaction occurs in the cytoplasm. Under stress conditions, JNK-mediated phosphorylation of SFN and YWHAZ, releases BAX to mitochondria. Interacts with RNF144B, which regulates the ubiquitin-dependent stability of BAX. Interacts with CLU under stress conditions that cause a conformation change leading to BAX oligomerization and association with mitochondria. Does not interact with CLU in unstressed cells. Interacts with FAIM2/LFG2. Interacts with RTL10/BOP. Interacts (via a C-terminal 33 residues) with NOL3 (via CARD domain); inhibits BAX activation and translocation and consequently cytochrome c release from mitochondria. Interacts with GIMAP3/IAN4 and GIMAP5/IAN5; this interaction is increased, when cells initiate apoptosis upon IL2 withdrawal. Interacts with IRF3; the interaction is direct, increases upon Sendai virus infection and mediates the formation of the apoptosis complex TOMM70:HSP90AA1:IRF3:BAX. Interacts with MOAP1, facilitating BAX-dependent mitochondrial outer membrane permeabilization and apoptosis. Interacts with BCL2L10/BCL-B. Interacts with non-acetylated XRCC6/Ku70; this interaction leads to BAX sequestration in the cytosol, away from the mitochondria, preventing BAX-mediated apoptosis. Interacts with BCL2A1 and BCL2L1 isoform Bcl-X(L). In terms of assembly, (Microbial infection) Interacts with adenovirus E1B 19K protein; this interaction blocks BAX oligomerization. As to quaternary structure, (Microbial infection) Interacts with human cytomegalovirus/HHV-5 protein vMIA/UL37. (Microbial infection) Interacts with enterovirus protein 2B; this interaction activates BAX-induced apoptosis. Ubiquitinated in the absence of XRCC6/Ku70. Ubiquitination promotes protein degradation. Ubiquitinated on Lys-128 and Lys-190. 'Lys-63'-linked polyubiquitin chains on Lys-128 are removed by USP12. As to expression, expressed in a wide variety of tissues. Isoform Psi is found in glial tumors. Isoform Alpha is expressed in spleen, breast, ovary, testis, colon and brain, and at low levels in skin and lung. Isoform Sigma is expressed in spleen, breast, ovary, testis, lung, colon, brain and at low levels in skin. Isoform Alpha and isoform Sigma are expressed in pro-myelocytic leukemia, histiocytic lymphoma, Burkitt's lymphoma, T-cell lymphoma, lymphoblastic leukemia, breast adenocarcinoma, ovary adenocarcinoma, prostate carcinoma, prostate adenocarcinoma, lung carcinoma, epidermoid carcinoma, small cell lung carcinoma and colon adenocarcinoma cell lines.

The protein resides in the mitochondrion outer membrane. It is found in the cytoplasm. Its subcellular location is the nucleus. In terms of biological role, plays a role in the mitochondrial apoptotic process. Under normal conditions, BAX is largely cytosolic via constant retrotranslocation from mitochondria to the cytosol mediated by BCL2L1/Bcl-xL, which avoids accumulation of toxic BAX levels at the mitochondrial outer membrane (MOM). Under stress conditions, undergoes a conformation change that causes translocation to the mitochondrion membrane, leading to the release of cytochrome c that then triggers apoptosis. Promotes activation of CASP3, and thereby apoptosis. This Homo sapiens (Human) protein is Apoptosis regulator BAX (BAX).